The chain runs to 82 residues: Acyl carrier protein (82 aa).

The 76-residue stretch at 4–79 (PEMEARLKQI…DALNYIEQKL (76 aa)) folds into the Carrier domain. An O-(pantetheine 4'-phosphoryl)serine modification is found at Ser-39.

Belongs to the acyl carrier protein (ACP) family. In terms of processing, 4'-phosphopantetheine is transferred from CoA to a specific serine of apo-ACP by AcpS. This modification is essential for activity because fatty acids are bound in thioester linkage to the sulfhydryl of the prosthetic group.

The protein resides in the cytoplasm. It functions in the pathway lipid metabolism; fatty acid biosynthesis. Carrier of the growing fatty acid chain in fatty acid biosynthesis. The polypeptide is Acyl carrier protein (Roseiflexus castenholzii (strain DSM 13941 / HLO8)).